The primary structure comprises 213 residues: Redox-sensing transcriptional repressor Rex (213 aa).

The segment at residues 18-57 (LYYRFLKNLHASGKQRVSSAELSEAVKVDPATIRRDFSYF) is a DNA-binding region (H-T-H motif). 92 to 97 (GVGNLG) contacts NAD(+).

This sequence belongs to the transcriptional regulatory Rex family. As to quaternary structure, homodimer.

It is found in the cytoplasm. Its function is as follows. Modulates transcription in response to changes in cellular NADH/NAD(+) redox state. The polypeptide is Redox-sensing transcriptional repressor Rex (Geobacillus kaustophilus (strain HTA426)).